The chain runs to 370 residues: Probable neutral protease 2 homolog ARB_03949 (370 aa).

Residues 1-19 form the signal peptide; that stretch reads MQLVAALAALGALVAPAVA. Positions 20–188 are excised as a propeptide; it reads YPHAPMNETL…SIHSRALQKR (169 aa). Disulfide bonds link C196/C267 and C274/C292. H316 is a Zn(2+) binding site. Residue E317 is part of the active site. Residues H320 and D331 each contribute to the Zn(2+) site.

Belongs to the peptidase M35 family. Requires Zn(2+) as cofactor.

It localises to the secreted. It catalyses the reaction Preferential cleavage of bonds with hydrophobic residues in P1'. Also 3-Asn-|-Gln-4 and 8-Gly-|-Ser-9 bonds in insulin B chain.. Functionally, probable secreted metalloprotease that shows high activities on basic nuclear substrates such as histone and protamine. May be involved in virulence. The chain is Probable neutral protease 2 homolog ARB_03949 from Arthroderma benhamiae (strain ATCC MYA-4681 / CBS 112371) (Trichophyton mentagrophytes).